Reading from the N-terminus, the 584-residue chain is MSKQTYKVCFCFRRRYRHTVSVAPAEIKTLFDNYSDKGLMTTDLLLRFLIDVQKQDKATKEEAQDIVNASSSLLHRNGLHLDAFFKYLFAVTNSPLSSLEVHQDMDAPLSHYFIYTGHNSYLTGNQLSSDCSELPIIEALKKGVRVIELDIWPNSDEDGIDVLHGRTLTSPVELIKCLRAIREHAFDVSDYPVVVTLEDHLTPKLQAKVAEMVTDIFGEMLFTPPSGECLKEFPSPAFLKKRIMISTKPPKEYKAATDDDLVKKGRDLGDKEVWGREVPSFIRRDRSVDKNDSNGDDDDDDDDDDDDDDGDDKIKKNAPPEYKHLIAIEAGKPKGGITECLKVDPDKVRRLSLSEEQLEKASEKYAKQIVRFTQRNLLRVYPKGTRITSSNYNPLIAWSHGAQMVAFNMQGLGRSLWVMQGMFRGNGGCGYIKKPDLLLKSNAVFDPEATLPVKTTLRVTIYMGEGWYYDFPHTHFDRYSPPDFYTRVGIAGVPADTVMKKTKTLEDNWIPAWDEVFEFPLTVPELALLRIEVHEYDMSEKDDFGGQICLPVWELRQGIRAVPLRNQDGVKCRSVKLLVRLEFV.

One can recognise an EF-hand-like domain in the interval 26–102 (EIKTLFDNYS…NSPLSSLEVH (77 aa)). Positions 103-248 (QDMDAPLSHY…LKKRIMISTK (146 aa)) constitute a PI-PLC X-box domain. Active-site residues include histidine 118 and histidine 164. The tract at residues 285-318 (DRSVDKNDSNGDDDDDDDDDDDDDDGDDKIKKNA) is disordered. Serine 287 carries the post-translational modification Phosphoserine. Acidic residues predominate over residues 294–311 (NGDDDDDDDDDDDDDDGD). The PI-PLC Y-box domain occupies 323–439 (KHLIAIEAGK…GYIKKPDLLL (117 aa)). A C2 domain is found at 433 to 566 (KKPDLLLKSN…QGIRAVPLRN (134 aa)).

Ca(2+) serves as cofactor. Expressed in leaves, roots, flowers and siliques.

It is found in the cell membrane. It catalyses the reaction a 1,2-diacyl-sn-glycero-3-phospho-(1D-myo-inositol-4,5-bisphosphate) + H2O = 1D-myo-inositol 1,4,5-trisphosphate + a 1,2-diacyl-sn-glycerol + H(+). The production of the second messenger molecules diacylglycerol (DAG) and inositol 1,4,5-trisphosphate (IP3) is mediated by activated phosphatidylinositol-specific phospholipase C enzymes. This Arabidopsis thaliana (Mouse-ear cress) protein is Phosphoinositide phospholipase C 7 (PLC7).